Reading from the N-terminus, the 113-residue chain is Hydrogenase maturation factor HypA (113 aa).

Residue His-2 coordinates Ni(2+). Residues Cys-73, Cys-76, Cys-89, and Cys-92 each coordinate Zn(2+).

The protein belongs to the HypA/HybF family.

Functionally, involved in the maturation of [NiFe] hydrogenases. Required for nickel insertion into the metal center of the hydrogenase. The sequence is that of Hydrogenase maturation factor HypA from Azorhizobium caulinodans (strain ATCC 43989 / DSM 5975 / JCM 20966 / LMG 6465 / NBRC 14845 / NCIMB 13405 / ORS 571).